We begin with the raw amino-acid sequence, 489 residues long: MMNRIITANLANLASSLMLAQVLGWHEPVYPDQVKWAGLGTGVCASGYRPLTRDEAMSIKGNLVSRMGQWQITGLADRWVIMGPGYNGEIKQGTAGETWCYPNSPVSGEIPTLSDWNIPAGDEVDVQWRLVHDNDYFIKPVSYLAHYLGYAWVGGNHSPYVGEDMDVTRVGDGWLIKGNNDGGCSGYRCGEKSSIKVSNFSYTLEPDSFSHGQVTESGKQLVKTITANATNYTDLPQQVVVTLKYDKATNWSKTDTYSLSEKVTTKNKFQWPLVGETELAIEIAASQSWASQKGGSTTETVSVEARPTVPPHSSLPVRVALYKSNISYPYEFKAEVNYDLTMKGFLRWGGNAWYTHPDNRPTWEHTFRLGPFRGQGEQHPLPVDKRYIPGEVKWWDWNWTISEYGLSTMQNNLGRVLRPIRSAVTGDFYAESQFAGDIEIGQPQTRSAKAAQLRSASAEEVALTSVDLDSEALANEGFGNVSLTIVPVQ.

The signal sequence occupies residues 1-24; sequence MMNRIITANLANLASSLMLAQVLG. 2 disulfides stabilise this stretch: Cys44/Cys100 and Cys184/Cys189. Positions 70 to 86 are interaction with host N-linked glycan; that stretch reads WQITGLADRWVIMGPGY. The interval 257 to 289 is part of the transmembrane beta-barrel after proteolytic activation of the toxin and insertion into the host membrane; that stretch reads YSLSEKVTTKNKFQWPLVGETELAIEIAASQSW. Positions 347-356 are interaction with glycans from host GPI-anchor; the sequence is RWGGNAWYTH. The propeptide occupies 445–489; it reads TRSAKAAQLRSASAEEVALTSVDLDSEALANEGFGNVSLTIVPVQ.

Belongs to the aerolysin family. In terms of assembly, homodimer in solution; homoheptamer in the host membrane. After binding to GPI-anchored proteins in target membranes and proteolytic removal of the C-terminal propeptide, the protein assembles into a heptameric pre-pore complex. A further conformation change leads to insertion into the host membrane. In terms of processing, proteolytic cleavage and subsequent release of the propeptide trigger a major conformation change, leading to the formation of a heptameric pre-pore that then inserts into the host membrane.

The protein localises to the secreted. Its subcellular location is the host cell membrane. Secreted, cytolytic toxin that forms pores in host membranes after proteolytic removal of a C-terminal propeptide, leading to destruction of the membrane permeability barrier and cell death. The pores are formed by transmembrane beta-strands and are approximately 3 nm in diameter. This Aeromonas salmonicida protein is Aerolysin (ash3).